A 537-amino-acid polypeptide reads, in one-letter code: Lysine--tRNA ligase (537 aa).

The short motif at 30–38 is the 'HIGH' region element; it reads PSGNIHIGN. The 'KMSKS' region signature appears at 276–280; that stretch reads AMSSS.

It belongs to the class-I aminoacyl-tRNA synthetase family.

The protein localises to the cytoplasm. The enzyme catalyses tRNA(Lys) + L-lysine + ATP = L-lysyl-tRNA(Lys) + AMP + diphosphate. This is Lysine--tRNA ligase from Methanosarcina barkeri (strain Fusaro / DSM 804).